The primary structure comprises 471 residues: 3-isopropylmalate dehydratase large subunit (471 aa).

Residues Cys-347, Cys-407, and Cys-410 each contribute to the [4Fe-4S] cluster site.

This sequence belongs to the aconitase/IPM isomerase family. LeuC type 1 subfamily. As to quaternary structure, heterodimer of LeuC and LeuD. Requires [4Fe-4S] cluster as cofactor.

It catalyses the reaction (2R,3S)-3-isopropylmalate = (2S)-2-isopropylmalate. Its pathway is amino-acid biosynthesis; L-leucine biosynthesis; L-leucine from 3-methyl-2-oxobutanoate: step 2/4. In terms of biological role, catalyzes the isomerization between 2-isopropylmalate and 3-isopropylmalate, via the formation of 2-isopropylmaleate. The sequence is that of 3-isopropylmalate dehydratase large subunit from Edwardsiella ictaluri (strain 93-146).